The chain runs to 60 residues: UPF0434 protein SG0997 (60 aa).

The protein belongs to the UPF0434 family.

In Sodalis glossinidius (strain morsitans), this protein is UPF0434 protein SG0997.